A 311-amino-acid chain; its full sequence is Formimidoylglutamase (311 aa).

Mn(2+) contacts are provided by histidine 130, aspartate 155, histidine 157, aspartate 159, cysteine 242, and aspartate 244.

Belongs to the arginase family. The cofactor is Mn(2+).

The catalysed reaction is N-formimidoyl-L-glutamate + H2O = formamide + L-glutamate. Its pathway is amino-acid degradation; L-histidine degradation into L-glutamate; L-glutamate from N-formimidoyl-L-glutamate (hydrolase route): step 1/1. In terms of biological role, catalyzes the conversion of N-formimidoyl-L-glutamate to L-glutamate and formamide. This is Formimidoylglutamase from Staphylococcus haemolyticus (strain JCSC1435).